Here is a 322-residue protein sequence, read N- to C-terminus: Germ cell-specific gene 1-like protein (322 aa).

Topologically, residues 1-8 are cytoplasmic; sequence MELSRRNR. Residues 9 to 29 form a helical membrane-spanning segment; sequence SLLSVVLNLLALSFSVAAFFT. Over 30-125 the chain is Extracellular; sequence SYWCEGTHKV…IELSPDSEKG (96 aa). Residues 126 to 146 form a helical membrane-spanning segment; that stretch reads VLWLSVISEFLYIILLSLGFL. The Cytoplasmic segment spans residues 147–166; it reads LMCLEFFSSSNFIDGLKINA. A helical membrane pass occupies residues 167–187; that stretch reads FAAIITVLSGLLGMVAHMMYM. At 188–209 the chain is on the extracellular side; the sequence is TVFQVTVNLGPKDWRPQTWYYG. Residues 210-230 traverse the membrane as a helical segment; it reads WSFGLAWLSFTLCMSASVLTL. The Cytoplasmic segment spans residues 231-322; it reads NTYTKTILEF…MDLEDDGDQC (92 aa).

The protein belongs to the GSG1 family. Component of the AMPAR complex.

It is found in the cell membrane. It localises to the synapse. Its function is as follows. As a component of the AMPAR complex, modifies AMPA receptor (AMPAR) gating. The polypeptide is Germ cell-specific gene 1-like protein (gsg1l) (Xenopus tropicalis (Western clawed frog)).